Here is a 583-residue protein sequence, read N- to C-terminus: Aspartate--tRNA(Asp/Asn) ligase (583 aa).

Glutamate 172 provides a ligand contact to L-aspartate. Positions 196 to 199 are aspartate; sequence QMLK. L-aspartate is bound at residue arginine 218. Residues 218-220 and glutamine 227 contribute to the ATP site; that span reads RDE. Histidine 446 contributes to the L-aspartate binding site. An ATP-binding site is contributed by glutamate 480. Arginine 487 provides a ligand contact to L-aspartate. Position 532–535 (532–535) interacts with ATP; the sequence is GLDR.

This sequence belongs to the class-II aminoacyl-tRNA synthetase family. Type 1 subfamily. Homodimer.

The protein localises to the cytoplasm. The enzyme catalyses tRNA(Asx) + L-aspartate + ATP = L-aspartyl-tRNA(Asx) + AMP + diphosphate. Functionally, aspartyl-tRNA synthetase with relaxed tRNA specificity since it is able to aspartylate not only its cognate tRNA(Asp) but also tRNA(Asn). Reaction proceeds in two steps: L-aspartate is first activated by ATP to form Asp-AMP and then transferred to the acceptor end of tRNA(Asp/Asn). The chain is Aspartate--tRNA(Asp/Asn) ligase from Streptococcus mutans serotype c (strain ATCC 700610 / UA159).